The chain runs to 305 residues: Ribonuclease BN (305 aa).

Zn(2+) is bound by residues H64, H66, D68, H69, H141, D212, and H270. Residue D68 is the Proton acceptor of the active site.

This sequence belongs to the RNase Z family. RNase BN subfamily. In terms of assembly, homodimer. The cofactor is Zn(2+).

Functionally, zinc phosphodiesterase, which has both exoribonuclease and endoribonuclease activities. This Escherichia coli O139:H28 (strain E24377A / ETEC) protein is Ribonuclease BN.